The following is a 504-amino-acid chain: Glycerol kinase (504 aa).

Thr-14 is a binding site for ADP. 3 residues coordinate ATP: Thr-14, Thr-15, and Ser-16. Residue Thr-14 participates in sn-glycerol 3-phosphate binding. Arg-18 contributes to the ADP binding site. 4 residues coordinate sn-glycerol 3-phosphate: Arg-84, Glu-85, Tyr-136, and Asp-246. Positions 84, 85, 136, 246, and 247 each coordinate glycerol. ADP contacts are provided by Thr-268 and Gly-311. ATP-binding residues include Thr-268, Gly-311, Gln-315, and Gly-412. Residues Gly-412 and Asn-416 each coordinate ADP.

Belongs to the FGGY kinase family.

The enzyme catalyses glycerol + ATP = sn-glycerol 3-phosphate + ADP + H(+). Its pathway is polyol metabolism; glycerol degradation via glycerol kinase pathway; sn-glycerol 3-phosphate from glycerol: step 1/1. Inhibited by fructose 1,6-bisphosphate (FBP). In terms of biological role, key enzyme in the regulation of glycerol uptake and metabolism. Catalyzes the phosphorylation of glycerol to yield sn-glycerol 3-phosphate. The polypeptide is Glycerol kinase (Aliivibrio salmonicida (strain LFI1238) (Vibrio salmonicida (strain LFI1238))).